The primary structure comprises 204 residues: Phosphatidylserine decarboxylase proenzyme (204 aa).

Catalysis depends on S169, which acts as the Schiff-base intermediate with substrate; via pyruvic acid. S169 is subject to Pyruvic acid (Ser); by autocatalysis.

This sequence belongs to the phosphatidylserine decarboxylase family. PSD-A subfamily. In terms of assembly, heterodimer of a large membrane-associated beta subunit and a small pyruvoyl-containing alpha subunit. Pyruvate is required as a cofactor. Is synthesized initially as an inactive proenzyme. Formation of the active enzyme involves a self-maturation process in which the active site pyruvoyl group is generated from an internal serine residue via an autocatalytic post-translational modification. Two non-identical subunits are generated from the proenzyme in this reaction, and the pyruvate is formed at the N-terminus of the alpha chain, which is derived from the carboxyl end of the proenzyme. The post-translation cleavage follows an unusual pathway, termed non-hydrolytic serinolysis, in which the side chain hydroxyl group of the serine supplies its oxygen atom to form the C-terminus of the beta chain, while the remainder of the serine residue undergoes an oxidative deamination to produce ammonia and the pyruvoyl prosthetic group on the alpha chain.

The protein resides in the cell membrane. The enzyme catalyses a 1,2-diacyl-sn-glycero-3-phospho-L-serine + H(+) = a 1,2-diacyl-sn-glycero-3-phosphoethanolamine + CO2. The protein operates within phospholipid metabolism; phosphatidylethanolamine biosynthesis; phosphatidylethanolamine from CDP-diacylglycerol: step 2/2. In terms of biological role, catalyzes the formation of phosphatidylethanolamine (PtdEtn) from phosphatidylserine (PtdSer). The polypeptide is Phosphatidylserine decarboxylase proenzyme (Solibacter usitatus (strain Ellin6076)).